Reading from the N-terminus, the 86-residue chain is Large ribosomal subunit protein eL30 (86 aa).

This sequence belongs to the eukaryotic ribosomal protein eL30 family.

This is Large ribosomal subunit protein eL30 (rpl30e) from Archaeoglobus fulgidus (strain ATCC 49558 / DSM 4304 / JCM 9628 / NBRC 100126 / VC-16).